The primary structure comprises 447 residues: ATP-dependent protease ATPase subunit HslU (447 aa).

Residues isoleucine 17, 59–64 (GVGKTE), aspartate 256, glutamate 321, and arginine 393 each bind ATP.

This sequence belongs to the ClpX chaperone family. HslU subfamily. As to quaternary structure, a double ring-shaped homohexamer of HslV is capped on each side by a ring-shaped HslU homohexamer. The assembly of the HslU/HslV complex is dependent on binding of ATP.

The protein localises to the cytoplasm. Its function is as follows. ATPase subunit of a proteasome-like degradation complex; this subunit has chaperone activity. The binding of ATP and its subsequent hydrolysis by HslU are essential for unfolding of protein substrates subsequently hydrolyzed by HslV. HslU recognizes the N-terminal part of its protein substrates and unfolds these before they are guided to HslV for hydrolysis. This Pseudomonas putida (strain ATCC 47054 / DSM 6125 / CFBP 8728 / NCIMB 11950 / KT2440) protein is ATP-dependent protease ATPase subunit HslU.